The following is a 128-amino-acid chain: Large-conductance mechanosensitive channel (128 aa).

The next 2 membrane-spanning stretches (helical) occupy residues F11–G31 and G70–V90.

Belongs to the MscL family. As to quaternary structure, homopentamer.

The protein resides in the cell membrane. Its function is as follows. Channel that opens in response to stretch forces in the membrane lipid bilayer. May participate in the regulation of osmotic pressure changes within the cell. In Listeria monocytogenes serotype 4b (strain CLIP80459), this protein is Large-conductance mechanosensitive channel.